Here is a 95-residue protein sequence, read N- to C-terminus: MAIDAATVRKVARLARIATPEDRLEPLAQELNGIMTWIEQLAQVDTDGVEPLTSVVHAGLPLREDVVTMGGDADLITANAPKSTGGFFVVPKVVE.

It belongs to the GatC family. As to quaternary structure, heterotrimer of A, B and C subunits.

The catalysed reaction is L-glutamyl-tRNA(Gln) + L-glutamine + ATP + H2O = L-glutaminyl-tRNA(Gln) + L-glutamate + ADP + phosphate + H(+). It carries out the reaction L-aspartyl-tRNA(Asn) + L-glutamine + ATP + H2O = L-asparaginyl-tRNA(Asn) + L-glutamate + ADP + phosphate + 2 H(+). Allows the formation of correctly charged Asn-tRNA(Asn) or Gln-tRNA(Gln) through the transamidation of misacylated Asp-tRNA(Asn) or Glu-tRNA(Gln) in organisms which lack either or both of asparaginyl-tRNA or glutaminyl-tRNA synthetases. The reaction takes place in the presence of glutamine and ATP through an activated phospho-Asp-tRNA(Asn) or phospho-Glu-tRNA(Gln). In Caulobacter sp. (strain K31), this protein is Aspartyl/glutamyl-tRNA(Asn/Gln) amidotransferase subunit C.